We begin with the raw amino-acid sequence, 274 residues long: NH(3)-dependent NAD(+) synthetase (274 aa).

46 to 53 (GISGGQDS) serves as a coordination point for ATP. Asp-52 contacts Mg(2+). Arg-140 is a deamido-NAD(+) binding site. ATP is bound at residue Thr-160. Residue Glu-165 coordinates Mg(2+). Residues Lys-173 and Asp-180 each coordinate deamido-NAD(+). ATP is bound by residues Lys-189 and Thr-211. Deamido-NAD(+) is bound at residue 260-261 (HK).

This sequence belongs to the NAD synthetase family. As to quaternary structure, homodimer.

It catalyses the reaction deamido-NAD(+) + NH4(+) + ATP = AMP + diphosphate + NAD(+) + H(+). The protein operates within cofactor biosynthesis; NAD(+) biosynthesis; NAD(+) from deamido-NAD(+) (ammonia route): step 1/1. Functionally, catalyzes the ATP-dependent amidation of deamido-NAD to form NAD. Uses ammonia as a nitrogen source. This Listeria innocua serovar 6a (strain ATCC BAA-680 / CLIP 11262) protein is NH(3)-dependent NAD(+) synthetase.